The chain runs to 772 residues: Transducin-like enhancer protein 4 (772 aa).

Disordered regions lie at residues Met-1 to Pro-24 and Leu-183 to Leu-359. The segment at Met-1–Gln-137 is q domain. The segment at His-138–Ser-205 is GP domain. Positions Pro-184 to Ile-203 are enriched in basic and acidic residues. A compositionally biased stretch (low complexity) spans Lys-204–Ser-213. Positions Ser-206–Pro-275 are ccN domain. 2 stretches are compositionally biased toward basic and acidic residues: residues Ala-216–Asp-253 and Ser-274–Ala-290. Positions Arg-276–Val-452 are SP domain. Over residues Pro-291–Ser-306 the composition is skewed to low complexity. The span at Lys-307–Lys-316 shows a compositional bias: basic and acidic residues. Positions Thr-318–Pro-329 are enriched in polar residues. WD repeat units follow at residues Asn-484 to Pro-522, Asn-530 to Lys-569, Ser-574 to Gln-613, Gly-616 to Gln-655, Asp-657 to Leu-696, Leu-698 to Gln-737, and Lys-739 to Tyr-772.

The protein belongs to the WD repeat Groucho/TLE family. As to quaternary structure, interacts with tcf7, tcf7l1, ripply2.2/bowline, dscr6/ripply3 and foxd3. Associates with tbx6 in the presence of ripply2.2/bowline. Interacts with EFNB1 through the SP domain. In terms of processing, ubiquitinated by XIAP/BIRC4. In terms of tissue distribution, expressed at high levels in the spleen and ovary.

It is found in the nucleus. Transcriptional corepressor. Functions with ripply2.2/bowline to down regulate transcription of tbx6-dependent gene expression. Represses transcription of siamois and nodal3. The sequence is that of Transducin-like enhancer protein 4 (tle4) from Xenopus laevis (African clawed frog).